Here is a 152-residue protein sequence, read N- to C-terminus: Endoribonuclease YbeY (152 aa).

Zn(2+) contacts are provided by His117, His121, and His127.

This sequence belongs to the endoribonuclease YbeY family. Requires Zn(2+) as cofactor.

It localises to the cytoplasm. Functionally, single strand-specific metallo-endoribonuclease involved in late-stage 70S ribosome quality control and in maturation of the 3' terminus of the 16S rRNA. This Borreliella afzelii (strain PKo) (Borrelia afzelii) protein is Endoribonuclease YbeY.